A 164-amino-acid polypeptide reads, in one-letter code: Ribosome-binding factor A (164 aa).

Positions 123 to 164 (ARDLGVPPSGEDDGDDEADDEDDDGGEEGPGAAAPPPADEGR) are disordered. Residues 132–149 (GEDDGDDEADDEDDDGGE) show a composition bias toward acidic residues. Positions 155–164 (AAPPPADEGR) are enriched in pro residues.

This sequence belongs to the RbfA family. In terms of assembly, monomer. Binds 30S ribosomal subunits, but not 50S ribosomal subunits or 70S ribosomes.

Its subcellular location is the cytoplasm. Its function is as follows. One of several proteins that assist in the late maturation steps of the functional core of the 30S ribosomal subunit. Associates with free 30S ribosomal subunits (but not with 30S subunits that are part of 70S ribosomes or polysomes). Required for efficient processing of 16S rRNA. May interact with the 5'-terminal helix region of 16S rRNA. In Rhodospirillum rubrum (strain ATCC 11170 / ATH 1.1.1 / DSM 467 / LMG 4362 / NCIMB 8255 / S1), this protein is Ribosome-binding factor A.